We begin with the raw amino-acid sequence, 183 residues long: Ubiquitin carboxyl-terminal hydrolase 17-like protein 23 (183 aa).

The 104-residue stretch at 80–183 folds into the USP domain; it reads AGLQNMGNTC…KACLPGHKQV (104 aa).

Belongs to the peptidase C19 family. USP17 subfamily.

The protein resides in the nucleus. The protein localises to the endoplasmic reticulum. The sequence is that of Ubiquitin carboxyl-terminal hydrolase 17-like protein 23 (USP17L23) from Homo sapiens (Human).